The sequence spans 123 residues: Methicillin resistance regulatory protein MecI (123 aa).

A DNA-binding region (H-T-H motif) is located at residues 7–71 (EISSAEWEVM…KDNKIFQYYS (65 aa)). An important for dimerization region spans residues 74–123 (EESDIKYKTSKNFINKVYKGGFNSLVLNFVEKEDLSQDEIEELRNILNKK).

The protein belongs to the BlaI transcriptional regulatory family. In terms of assembly, monomer and homodimer. Upon exposure to beta-lactams, proteolytic cleavage at a single site impairs dimerization and abolishes repressor activity.

The protein resides in the cytoplasm. Its function is as follows. Transcriptional repressor that constitutively blocks the transcription of the gene for the penicillin-binding protein MecA. Binds DNA as a dimer. This Mammaliicoccus sciuri (Staphylococcus sciuri) protein is Methicillin resistance regulatory protein MecI (mecI).